A 76-amino-acid polypeptide reads, in one-letter code: Signal recognition particle 9 kDa protein (76 aa).

The protein belongs to the SRP9 family. Heterodimer with SRP14; binds RNA as heterodimer. Component of a signal recognition particle complex that consists of a 7SL RNA molecule of 300 nucleotides and six protein subunits: srpa-72, srpa-68, SRP54, F37F2.2/SRP19, F25G6.8/SRP14 and ZK512.4/SRP9.

It is found in the cytoplasm. In terms of biological role, component of the signal recognition particle (SRP) complex, a ribonucleoprotein complex that mediates the cotranslational targeting of secretory and membrane proteins to the endoplasmic reticulum (ER). SRP9 together with SRP14 and the Alu portion of the SRP RNA, constitutes the elongation arrest domain of SRP. The complex of SRP9 and SRP14 is required for SRP RNA binding. The polypeptide is Signal recognition particle 9 kDa protein (Caenorhabditis elegans).